The following is a 200-amino-acid chain: High mobility group protein B3 (200 aa).

The residue at position 3 (Lys-3) is an N6-acetyllysine. DNA-binding regions (HMG box) lie at residues 9–79 (PKGK…KDYG) and 93–161 (PKRP…ADYK). Residue Cys-23 is modified to Cysteine sulfonic acid (-SO3H); alternate. Cysteines 23 and 45 form a disulfide. Lys-30 and Lys-43 each carry N6-acetyllysine. Cys-45 bears the Cysteine sulfonic acid (-SO3H); alternate mark. The disordered stretch occupies residues 71 to 97 (YDREMKDYGPAKGGKKKKDPNAPKRPP). Residue Ser-98 is modified to Phosphoserine. The residue at position 104 (Cys-104) is a Cysteine sulfonic acid (-SO3H). An N6-acetyllysine mark is found at Lys-112 and Lys-139. A disordered region spans residues 163–200 (KGKFDGAKGAAKVARKKVEEEDEEDEEEEEEEEEEEDE). The segment covering 182 to 200 (EEDEEDEEEEEEEEEEEDE) has biased composition (acidic residues).

The protein belongs to the HMGB family. In terms of processing, reduction/oxidation of cysteine residues Cys-23, Cys-45 and Cys-104 and a possible intramolecular disulfide bond involving Cys-23 and Cys-45 give rise to different redox forms with specific functional activities in various cellular compartments: 1- fully reduced HMGB3 (HMGB3C23hC45hC104h), 2- disulfide HMGB3 (HMGB3C23-C45C104h) and 3- sulfonyl HMGB3 (HMGB3C23soC45soC104so).

Its subcellular location is the nucleus. It localises to the chromosome. The protein resides in the cytoplasm. Multifunctional protein with various roles in different cellular compartments. May act in a redox sensitive manner. Associates with chromatin and binds DNA with a preference for non-canonical DNA structures such as single-stranded DNA. Can bend DNA and enhance DNA flexibility by looping thus providing a mechanism to promote activities on various gene promoters. Proposed to be involved in the innate immune response to nucleic acids by acting as a cytoplasmic promiscuous immunogenic DNA/RNA sensor. Negatively regulates B-cell and myeloid cell differentiation. In hematopoietic stem cells may regulate the balance between self-renewal and differentiation. Involved in negative regulation of canonical Wnt signaling. The chain is High mobility group protein B3 (HMGB3) from Bos taurus (Bovine).